Here is a 55-residue protein sequence, read N- to C-terminus: ATP synthase F(0) complex subunit 8 (55 aa).

Residues 10–30 form a helical membrane-spanning segment; sequence FPIMMLSWLIFSLIIQPKLLL. The tract at residues 35–55 is disordered; the sequence is NPPSNKTTTTTRSNPWTWPWT. Over residues 37-55 the composition is skewed to low complexity; that stretch reads PSNKTTTTTRSNPWTWPWT.

Belongs to the ATPase protein 8 family. As to quaternary structure, component of the ATP synthase complex composed at least of ATP5F1A/subunit alpha, ATP5F1B/subunit beta, ATP5MC1/subunit c (homooctomer), MT-ATP6/subunit a, MT-ATP8/subunit 8, ATP5ME/subunit e, ATP5MF/subunit f, ATP5MG/subunit g, ATP5MK/subunit k, ATP5MJ/subunit j, ATP5F1C/subunit gamma, ATP5F1D/subunit delta, ATP5F1E/subunit epsilon, ATP5PF/subunit F6, ATP5PB/subunit b, ATP5PD/subunit d, ATP5PO/subunit OSCP. ATP synthase complex consists of a soluble F(1) head domain (subunits alpha(3) and beta(3)) - the catalytic core - and a membrane F(0) domain - the membrane proton channel (subunits c, a, 8, e, f, g, k and j). These two domains are linked by a central stalk (subunits gamma, delta, and epsilon) rotating inside the F1 region and a stationary peripheral stalk (subunits F6, b, d, and OSCP).

The protein localises to the mitochondrion membrane. Its function is as follows. Subunit 8, of the mitochondrial membrane ATP synthase complex (F(1)F(0) ATP synthase or Complex V) that produces ATP from ADP in the presence of a proton gradient across the membrane which is generated by electron transport complexes of the respiratory chain. ATP synthase complex consist of a soluble F(1) head domain - the catalytic core - and a membrane F(1) domain - the membrane proton channel. These two domains are linked by a central stalk rotating inside the F(1) region and a stationary peripheral stalk. During catalysis, ATP synthesis in the catalytic domain of F(1) is coupled via a rotary mechanism of the central stalk subunits to proton translocation. In vivo, can only synthesize ATP although its ATP hydrolase activity can be activated artificially in vitro. Part of the complex F(0) domain. This is ATP synthase F(0) complex subunit 8 from Opisthocomus hoazin (Hoatzin).